The primary structure comprises 266 residues: Gas vesicle protein L (266 aa).

It belongs to the gas vesicle GvpF/GvpL family.

It is found in the gas vesicle. Might be involved in nucleating gas vesicle formation. A minor component of the gas vesicle. Gas vesicles are hollow, gas filled proteinaceous nanostructures found in some microorganisms. It is not clear what function gas vesicles perform in soil bacteria. This is Gas vesicle protein L from Streptomyces sp. (strain CB03234).